The chain runs to 379 residues: Glutamate 5-kinase (379 aa).

Lys-15 contributes to the ATP binding site. Substrate-binding residues include Ser-59, Asp-146, and Asn-158. 178–179 (TD) contacts ATP. In terms of domain architecture, PUA spans 285–363 (RGAVTVDVGA…SEFERLLGYS (79 aa)).

This sequence belongs to the glutamate 5-kinase family.

Its subcellular location is the cytoplasm. The catalysed reaction is L-glutamate + ATP = L-glutamyl 5-phosphate + ADP. The protein operates within amino-acid biosynthesis; L-proline biosynthesis; L-glutamate 5-semialdehyde from L-glutamate: step 1/2. Its function is as follows. Catalyzes the transfer of a phosphate group to glutamate to form L-glutamate 5-phosphate. The protein is Glutamate 5-kinase of Paracidovorax citrulli (strain AAC00-1) (Acidovorax citrulli).